The chain runs to 124 residues: MATISQLVRNPRKDKVQKTSVPALEACPQKRGVCTRVYTTTPKKPNSAMRKVARVRLTNGFEVTSYIGGEGHNLQEHSVILIRGGRVKDLPGVRYHTVRGALDTSGVTARRKGRSKYGAKRPKA.

The tract at residues 1–20 (MATISQLVRNPRKDKVQKTS) is disordered. Position 89 is a 3-methylthioaspartic acid (Asp-89). Positions 104 to 124 (TSGVTARRKGRSKYGAKRPKA) are disordered. Residues 109 to 124 (ARRKGRSKYGAKRPKA) are compositionally biased toward basic residues.

It belongs to the universal ribosomal protein uS12 family. In terms of assembly, part of the 30S ribosomal subunit. Contacts proteins S8 and S17. May interact with IF1 in the 30S initiation complex.

In terms of biological role, with S4 and S5 plays an important role in translational accuracy. Functionally, interacts with and stabilizes bases of the 16S rRNA that are involved in tRNA selection in the A site and with the mRNA backbone. Located at the interface of the 30S and 50S subunits, it traverses the body of the 30S subunit contacting proteins on the other side and probably holding the rRNA structure together. The combined cluster of proteins S8, S12 and S17 appears to hold together the shoulder and platform of the 30S subunit. This Psychromonas ingrahamii (strain DSM 17664 / CCUG 51855 / 37) protein is Small ribosomal subunit protein uS12.